Consider the following 598-residue polypeptide: Polypeptide N-acetylgalactosaminyltransferase 17 (598 aa).

At methionine 1 to arginine 6 the chain is on the cytoplasmic side. Residues valine 7–lysine 27 form a helical; Signal-anchor for type II membrane protein membrane-spanning segment. At cysteine 28 to lysine 598 the chain is on the lumenal side. The N-linked (GlcNAc...) asparagine glycan is linked to asparagine 50. Cystine bridges form between cysteine 142/cysteine 373 and cysteine 364/cysteine 443. Positions leucine 151–arginine 262 are catalytic subdomain A. Substrate-binding residues include aspartate 192 and arginine 223. Positions 246, 248, and 378 each coordinate Mn(2+). The segment at proline 319 to arginine 381 is catalytic subdomain B. Substrate is bound by residues arginine 381 and tyrosine 386. Asparagine 461 and asparagine 486 each carry an N-linked (GlcNAc...) asparagine glycan. The region spanning alanine 465–lysine 594 is the Ricin B-type lectin domain. 3 cysteine pairs are disulfide-bonded: cysteine 478–cysteine 494, cysteine 526–cysteine 541, and cysteine 568–cysteine 586.

This sequence belongs to the glycosyltransferase 2 family. GalNAc-T subfamily. Requires Mn(2+) as cofactor.

It localises to the golgi apparatus membrane. It catalyses the reaction L-seryl-[protein] + UDP-N-acetyl-alpha-D-galactosamine = a 3-O-[N-acetyl-alpha-D-galactosaminyl]-L-seryl-[protein] + UDP + H(+). The enzyme catalyses L-threonyl-[protein] + UDP-N-acetyl-alpha-D-galactosamine = a 3-O-[N-acetyl-alpha-D-galactosaminyl]-L-threonyl-[protein] + UDP + H(+). Its pathway is protein modification; protein glycosylation. In terms of biological role, may catalyze the initial reaction in O-linked oligosaccharide biosynthesis, the transfer of an N-acetyl-D-galactosamine residue to a serine or threonine residue on the protein receptor. The protein is Polypeptide N-acetylgalactosaminyltransferase 17 of Mus musculus (Mouse).